Reading from the N-terminus, the 449-residue chain is Cytochrome P450 2E1 (449 aa).

Substrate is bound at residue 254-259; it reads FAGTET. Cys-393 provides a ligand contact to heme.

This sequence belongs to the cytochrome P450 family. As to quaternary structure, interacts with chaperones HSP70 and HSP90; this interaction is required for initial targeting to mitochondria. Requires heme as cofactor.

It localises to the endoplasmic reticulum membrane. The protein resides in the microsome membrane. The protein localises to the mitochondrion inner membrane. It catalyses the reaction an organic molecule + reduced [NADPH--hemoprotein reductase] + O2 = an alcohol + oxidized [NADPH--hemoprotein reductase] + H2O + H(+). The catalysed reaction is (5Z,8Z,11Z)-eicosatrienoate + reduced [NADPH--hemoprotein reductase] + O2 = 19-hydroxy-(5Z,8Z,11Z)-eicosatrienoate + oxidized [NADPH--hemoprotein reductase] + H2O + H(+). The enzyme catalyses (5Z,8Z,11Z,14Z,17Z)-eicosapentaenoate + reduced [NADPH--hemoprotein reductase] + O2 = 19-hydroxy-(5Z,8Z,11Z,14Z,17Z)-eicosapentaenoate + oxidized [NADPH--hemoprotein reductase] + H2O + H(+). It carries out the reaction (4Z,7Z,10Z,13Z,16Z,19Z)-docosahexaenoate + reduced [NADPH--hemoprotein reductase] + O2 = 21-hydroxy-(4Z,7Z,10Z,13Z,16Z,19Z)-docosahexaenoate + oxidized [NADPH--hemoprotein reductase] + H2O + H(+). It catalyses the reaction dodecanoate + reduced [NADPH--hemoprotein reductase] + O2 = 11-hydroxydodecanoate + oxidized [NADPH--hemoprotein reductase] + H2O + H(+). The catalysed reaction is tetradecanoate + reduced [NADPH--hemoprotein reductase] + O2 = 13-hydroxytetradecanoate + oxidized [NADPH--hemoprotein reductase] + H2O + H(+). The enzyme catalyses 4-nitrophenol + NADPH + O2 + H(+) = 4-nitrocatechol + NADP(+) + H2O. It participates in lipid metabolism; fatty acid metabolism. With respect to regulation, the omega-1 hydroxylase activity is stimulated by cytochrome b5. In terms of biological role, a cytochrome P450 monooxygenase involved in the metabolism of fatty acids. Mechanistically, uses molecular oxygen inserting one oxygen atom into a substrate, and reducing the second into a water molecule, with two electrons provided by NADPH via cytochrome P450 reductase (NADPH--hemoprotein reductase). Catalyzes the hydroxylation of carbon-hydrogen bonds. Hydroxylates fatty acids specifically at the omega-1 position displaying the highest catalytic activity for saturated fatty acids. May be involved in the oxidative metabolism of xenobiotics. This chain is Cytochrome P450 2E1 (CYP2E1), found in Macaca fascicularis (Crab-eating macaque).